Here is a 338-residue protein sequence, read N- to C-terminus: UPF0284 protein TV0153 (338 aa).

Belongs to the UPF0284 family.

The chain is UPF0284 protein TV0153 from Thermoplasma volcanium (strain ATCC 51530 / DSM 4299 / JCM 9571 / NBRC 15438 / GSS1).